Reading from the N-terminus, the 148-residue chain is MNLSSLKPAEGAVKSRKRIGRGPGSGLGGTSTRGHKGAKSRSGYSKKIGFEGGQMPIQRRLPKFGFKNINRVEYKPINLSVLQTLSEANSLTKISVEDLIAAGLVSRNSLVKILANGTVTTALTVEAHAFSKTAEEAIVRAGGSVVKL.

The interval 1 to 51 (MNLSSLKPAEGAVKSRKRIGRGPGSGLGGTSTRGHKGAKSRSGYSKKIGFE) is disordered. Over residues 21-31 (RGPGSGLGGTS) the composition is skewed to gly residues.

Belongs to the universal ribosomal protein uL15 family. Part of the 50S ribosomal subunit.

In terms of biological role, binds to the 23S rRNA. This Porphyromonas gingivalis (strain ATCC BAA-308 / W83) protein is Large ribosomal subunit protein uL15.